Reading from the N-terminus, the 441-residue chain is Methionine gamma-lyase (441 aa).

The segment at 1-25 (MAHFLETQEPLVFSGKKRNDRDDED) is disordered. The residue at position 248 (Lys-248) is an N6-(pyridoxal phosphate)lysine.

It belongs to the trans-sulfuration enzymes family. In terms of assembly, homotetramer. Requires pyridoxal 5'-phosphate as cofactor. In terms of tissue distribution, expressed in roots, stems, siliques, leaves, flowers and seeds after imbibition (at protein level). Transcripts accumulate in dry mature seeds, but at protein level, only present upon imbibition.

It is found in the cytoplasm. The catalysed reaction is L-methionine + H2O = methanethiol + 2-oxobutanoate + NH4(+). Catalyzes the degradation of L-methionine to alpha-ketobutyrate, methanethiol and ammonia. Exhibits a high activity toward L-methionine, L-ethionine, L-homocysteine and seleno-L-methionine, but not L-cysteine. Involved in an alternative cysteine biosynthesis pathway to the reverse trans-sulfuration pathway (methionine-&gt;homocysteine-&gt;cystathionine-&gt;cysteine) in which methanethiol is an intermediate. Also mediates an alternative isoleucine biosynthesis pathway in which 2-ketobutyrate is an intermediate. In Arabidopsis thaliana (Mouse-ear cress), this protein is Methionine gamma-lyase (MGL).